Here is a 514-residue protein sequence, read N- to C-terminus: Peptide chain release factor 3 (514 aa).

Residues 8 to 268 (KKRRTFAIIS…TFLEFAPEPH (261 aa)) form the tr-type G domain. GTP is bound by residues 17–24 (SHPDAGKT), 85–89 (DTPGH), and 139–142 (NKLD).

Belongs to the TRAFAC class translation factor GTPase superfamily. Classic translation factor GTPase family. PrfC subfamily.

It is found in the cytoplasm. Increases the formation of ribosomal termination complexes and stimulates activities of RF-1 and RF-2. It binds guanine nucleotides and has strong preference for UGA stop codons. It may interact directly with the ribosome. The stimulation of RF-1 and RF-2 is significantly reduced by GTP and GDP, but not by GMP. The sequence is that of Peptide chain release factor 3 from Streptococcus pyogenes serotype M2 (strain MGAS10270).